The chain runs to 234 residues: Phosphoglycolate phosphatase (234 aa).

Asp9 acts as the Nucleophile in catalysis. Mg(2+) is bound by residues Asp9 and Asp11. Residue Lys162 coordinates substrate. Positions 185 and 189 each coordinate Mg(2+).

It belongs to the archaeal SPP-like hydrolase family. It depends on Mg(2+) as a cofactor.

The enzyme catalyses 2-phosphoglycolate + H2O = glycolate + phosphate. Functionally, catalyzes the dephosphorylation of 2-phosphoglycolate. This Methanobrevibacter smithii (strain ATCC 35061 / DSM 861 / OCM 144 / PS) protein is Phosphoglycolate phosphatase.